The sequence spans 154 residues: Phosphopantetheine adenylyltransferase (154 aa).

Threonine 10 is a substrate binding site. Residues 10 to 11 and histidine 18 each bind ATP; that span reads TF. Lysine 42, leucine 74, and arginine 88 together coordinate substrate. ATP contacts are provided by residues 89–91, glutamate 99, and 124–130; these read GLR and NAFISSS.

This sequence belongs to the bacterial CoaD family. Homohexamer. Requires Mg(2+) as cofactor.

Its subcellular location is the cytoplasm. The enzyme catalyses (R)-4'-phosphopantetheine + ATP + H(+) = 3'-dephospho-CoA + diphosphate. It functions in the pathway cofactor biosynthesis; coenzyme A biosynthesis; CoA from (R)-pantothenate: step 4/5. Functionally, reversibly transfers an adenylyl group from ATP to 4'-phosphopantetheine, yielding dephospho-CoA (dPCoA) and pyrophosphate. The sequence is that of Phosphopantetheine adenylyltransferase from Nautilia profundicola (strain ATCC BAA-1463 / DSM 18972 / AmH).